The chain runs to 177 residues: UPF0177 protein YxdF (177 aa).

A run of 4 helical transmembrane segments spans residues 2–22 (TLVL…KNTL), 30–50 (IFWL…VTVL), 117–137 (ALVH…SFII), and 152–172 (IVHS…DTFF).

Belongs to the UPF0177 family.

The protein resides in the cell membrane. The protein is UPF0177 protein YxdF (yxdF) of Lactococcus lactis subsp. lactis (strain IL1403) (Streptococcus lactis).